The sequence spans 427 residues: 3-phosphoshikimate 1-carboxyvinyltransferase (427 aa).

3-phosphoshikimate contacts are provided by Lys20, Ser21, and Arg25. Lys20 serves as a coordination point for phosphoenolpyruvate. Gly92 and Arg120 together coordinate phosphoenolpyruvate. Positions 166, 168, 312, and 339 each coordinate 3-phosphoshikimate. A phosphoenolpyruvate-binding site is contributed by Gln168. The active-site Proton acceptor is the Asp312. Phosphoenolpyruvate contacts are provided by Arg343 and Arg385.

Belongs to the EPSP synthase family. In terms of assembly, monomer.

It localises to the cytoplasm. It carries out the reaction 3-phosphoshikimate + phosphoenolpyruvate = 5-O-(1-carboxyvinyl)-3-phosphoshikimate + phosphate. The protein operates within metabolic intermediate biosynthesis; chorismate biosynthesis; chorismate from D-erythrose 4-phosphate and phosphoenolpyruvate: step 6/7. Catalyzes the transfer of the enolpyruvyl moiety of phosphoenolpyruvate (PEP) to the 5-hydroxyl of shikimate-3-phosphate (S3P) to produce enolpyruvyl shikimate-3-phosphate and inorganic phosphate. This chain is 3-phosphoshikimate 1-carboxyvinyltransferase, found in Streptococcus thermophilus (strain CNRZ 1066).